We begin with the raw amino-acid sequence, 487 residues long: Recombining binding protein suppressor of hairless (487 aa).

2 DNA-binding regions span residues 44 to 54 and 152 to 157; these read QKSYGNEKRFF and SKPSKK. Lysine 162 carries the post-translational modification N6-acetyllysine. The interval 179–184 is DNA-binding; that stretch reads RLRSQT. An IPT/TIG domain is found at 342-432; sequence PVVESLQLNG…YSTSLTFTYT (91 aa). Positions 452-468 are enriched in polar residues; the sequence is SSQVPPNESNTNSEGSY. The interval 452–487 is disordered; it reads SSQVPPNESNTNSEGSYTNVSTNSTSVTSSTATVVS. Low complexity predominate over residues 469-487; sequence TNVSTNSTSVTSSTATVVS.

It belongs to the Su(H) family. Interacts with activated NOTCH1, NOTCH2 or NOTCH3. Interacts with MINT/SHARP. This interaction may mediate the recruitment of large corepressor complexes containing proteins such as HDAC1, HDAC2, NCOR2, SAP30, FHL1/KYOT2 and CIR1. Interacts with EP300, MAML1 and PTF1A. Interacts with RITA1, leading to nuclear export, prevent the interaction between RBPJ and NICD product and subsequent down-regulation of the Notch signaling pathway. Interacts with SNW1. Interacts with CHCHD2 and CXXC5. Interacts with BEND6 (via BEN domain). Interacts with NKAPL. Interacts with ZMIZ1. Interacts with RBM15. Interacts with L3MBTL3 and KDM1A; the interaction with KDM1A is weaker in the absence of L3MBTL3 and the interaction with L3MBTL3 is impaired by Notch-derived peptides containing the intracellular domain (NICD).

It localises to the nucleus. The protein localises to the cytoplasm. Its function is as follows. Transcriptional regulator that plays a central role in Notch signaling, a signaling pathway involved in cell-cell communication that regulates a broad spectrum of cell-fate determinations. Acts as a transcriptional repressor when it is not associated with Notch proteins. When associated with some NICD product of Notch proteins (Notch intracellular domain), it acts as a transcriptional activator that activates transcription of Notch target genes. Probably represses or activates transcription via the recruitment of chromatin remodeling complexes containing histone deacetylase or histone acetylase proteins, respectively. Specifically binds to the immunoglobulin kappa-type J segment recombination signal sequence. Binds specifically to methylated DNA. Binds to the oxygen responsive element of COX4I2 and activates its transcription under hypoxia conditions (4% oxygen). Negatively regulates the phagocyte oxidative burst in response to bacterial infection by repressing transcription of NADPH oxidase subunits. This Bos taurus (Bovine) protein is Recombining binding protein suppressor of hairless (RBPJ).